We begin with the raw amino-acid sequence, 150 residues long: Ribonuclease H (150 aa).

The RNase H type-1 domain maps to 1–142; it reads MSDSVEIFTD…ADQLANRGVD (142 aa). Residues Asp-10, Glu-48, Asp-70, and Asp-134 each coordinate Mg(2+).

Belongs to the RNase H family. Monomer. Mg(2+) serves as cofactor.

It localises to the cytoplasm. The enzyme catalyses Endonucleolytic cleavage to 5'-phosphomonoester.. Endonuclease that specifically degrades the RNA of RNA-DNA hybrids. This Pseudomonas fluorescens (strain ATCC BAA-477 / NRRL B-23932 / Pf-5) protein is Ribonuclease H.